The chain runs to 219 residues: Orotate phosphoribosyltransferase (219 aa).

Position 26 (Lys-26) interacts with 5-phospho-alpha-D-ribose 1-diphosphate. 34–35 (FF) is an orotate binding site. 5-phospho-alpha-D-ribose 1-diphosphate is bound by residues 72-73 (YK), Arg-98, Lys-99, Lys-102, His-104, and 124-132 (DDVITAGTA). Positions 128 and 156 each coordinate orotate.

It belongs to the purine/pyrimidine phosphoribosyltransferase family. PyrE subfamily. As to quaternary structure, homodimer. It depends on Mg(2+) as a cofactor.

It carries out the reaction orotidine 5'-phosphate + diphosphate = orotate + 5-phospho-alpha-D-ribose 1-diphosphate. Its pathway is pyrimidine metabolism; UMP biosynthesis via de novo pathway; UMP from orotate: step 1/2. Its function is as follows. Catalyzes the transfer of a ribosyl phosphate group from 5-phosphoribose 1-diphosphate to orotate, leading to the formation of orotidine monophosphate (OMP). The chain is Orotate phosphoribosyltransferase from Xanthomonas axonopodis pv. citri (strain 306).